The sequence spans 106 residues: Large ribosomal subunit protein eL42 (106 aa).

It belongs to the eukaryotic ribosomal protein eL42 family.

This chain is Large ribosomal subunit protein eL42 (RPL44), found in Wickerhamomyces ciferrii (strain ATCC 14091 / BCRC 22168 / CBS 111 / JCM 3599 / NBRC 0793 / NRRL Y-1031 F-60-10) (Yeast).